The chain runs to 363 residues: Trichocyst matrix protein T4-A (363 aa).

The N-terminal stretch at 1–17 is a signal peptide; that stretch reads MARSLTILAIVFAVATA. Residues 18–52 constitute a propeptide that is removed on maturation; the sequence is RVTKSESPKEILAQVNKDSFGNSILSVLQLQLATG. The stretch at 85–119 forms a coiled coil; the sequence is VAFEKIIADLEQEIAYHQTQIVALSNLRDSTTEAL. The propeptide occupies 190-221; sequence RFEKVQAKLMESKHALFKPLINALTQLASKVD. Residues 244–352 adopt a coiled-coil conformation; that stretch reads ASLLATEERQ…EVLTQKLSAA (109 aa).

It belongs to the TMP family. Post-translationally, two components are produced by post-translational processing from the precursor peptide.

It localises to the trichocyst. In terms of biological role, structural protein that crystallize inside the trichocyst matrix. The sequence is that of Trichocyst matrix protein T4-A (T4A) from Paramecium tetraurelia.